Consider the following 130-residue polypeptide: Small ribosomal subunit protein uS11c (130 aa).

The protein belongs to the universal ribosomal protein uS11 family. As to quaternary structure, part of the 30S ribosomal subunit.

It localises to the plastid. It is found in the chloroplast. The chain is Small ribosomal subunit protein uS11c from Phaeodactylum tricornutum (strain CCAP 1055/1).